The sequence spans 500 residues: L-arabinose isomerase (500 aa).

4 residues coordinate Mn(2+): Glu306, Glu333, His349, and His448.

It belongs to the arabinose isomerase family. The cofactor is Mn(2+).

The catalysed reaction is beta-L-arabinopyranose = L-ribulose. Its pathway is carbohydrate degradation; L-arabinose degradation via L-ribulose; D-xylulose 5-phosphate from L-arabinose (bacterial route): step 1/3. Its function is as follows. Catalyzes the conversion of L-arabinose to L-ribulose. This Koribacter versatilis (strain Ellin345) protein is L-arabinose isomerase.